The following is a 464-amino-acid chain: Protein FAM90A18 (464 aa).

Disordered stretches follow at residues methionine 1 to leucine 42, proline 70 to aspartate 387, and histidine 415 to proline 437. Composition is skewed to basic and acidic residues over residues glycine 74–valine 89 and asparagine 97–arginine 114. Residues leucine 180 to leucine 197 are compositionally biased toward low complexity.

Belongs to the FAM90 family.

This Homo sapiens (Human) protein is Protein FAM90A18.